Consider the following 157-residue polypeptide: Transcription elongation factor GreA (157 aa).

Residues 46-67 (AEYHAARERQSFIEGRIKELED) adopt a coiled-coil conformation.

It belongs to the GreA/GreB family.

Functionally, necessary for efficient RNA polymerase transcription elongation past template-encoded arresting sites. The arresting sites in DNA have the property of trapping a certain fraction of elongating RNA polymerases that pass through, resulting in locked ternary complexes. Cleavage of the nascent transcript by cleavage factors such as GreA or GreB allows the resumption of elongation from the new 3'terminus. GreA releases sequences of 2 to 3 nucleotides. The polypeptide is Transcription elongation factor GreA (Rhodospirillum rubrum (strain ATCC 11170 / ATH 1.1.1 / DSM 467 / LMG 4362 / NCIMB 8255 / S1)).